Reading from the N-terminus, the 432-residue chain is Glutamyl-tRNA reductase (432 aa).

Substrate-binding positions include 49–52 (TCNR), Ser107, 112–114 (ETQ), and Gln118. Cys50 (nucleophile) is an active-site residue. Residue 186 to 191 (GAGEMG) coordinates NADP(+).

The protein belongs to the glutamyl-tRNA reductase family. In terms of assembly, homodimer.

It carries out the reaction (S)-4-amino-5-oxopentanoate + tRNA(Glu) + NADP(+) = L-glutamyl-tRNA(Glu) + NADPH + H(+). Its pathway is porphyrin-containing compound metabolism; protoporphyrin-IX biosynthesis; 5-aminolevulinate from L-glutamyl-tRNA(Glu): step 1/2. Catalyzes the NADPH-dependent reduction of glutamyl-tRNA(Glu) to glutamate 1-semialdehyde (GSA). The protein is Glutamyl-tRNA reductase of Campylobacter jejuni subsp. jejuni serotype O:6 (strain 81116 / NCTC 11828).